The sequence spans 201 residues: 3-isopropylmalate dehydratase small subunit (201 aa).

Belongs to the LeuD family. LeuD type 1 subfamily. As to quaternary structure, heterodimer of LeuC and LeuD.

It catalyses the reaction (2R,3S)-3-isopropylmalate = (2S)-2-isopropylmalate. It participates in amino-acid biosynthesis; L-leucine biosynthesis; L-leucine from 3-methyl-2-oxobutanoate: step 2/4. Its function is as follows. Catalyzes the isomerization between 2-isopropylmalate and 3-isopropylmalate, via the formation of 2-isopropylmaleate. The protein is 3-isopropylmalate dehydratase small subunit of Methylorubrum extorquens (strain ATCC 14718 / DSM 1338 / JCM 2805 / NCIMB 9133 / AM1) (Methylobacterium extorquens).